The primary structure comprises 88 residues: UPF0367 protein syc2447_c (88 aa).

It belongs to the UPF0367 family.

The polypeptide is UPF0367 protein syc2447_c (Synechococcus sp. (strain ATCC 27144 / PCC 6301 / SAUG 1402/1) (Anacystis nidulans)).